Reading from the N-terminus, the 134-residue chain is Small ribosomal subunit protein uS9 (134 aa).

The tract at residues 109-134 is disordered; the sequence is DARRTEPHKPSKSSKGPRARRQKSYR. Over residues 118-134 the composition is skewed to basic residues; the sequence is PSKSSKGPRARRQKSYR.

This sequence belongs to the universal ribosomal protein uS9 family.

The polypeptide is Small ribosomal subunit protein uS9 (Methanococcus vannielii (strain ATCC 35089 / DSM 1224 / JCM 13029 / OCM 148 / SB)).